The primary structure comprises 146 residues: Putative esterase DR_2321 (146 aa).

This sequence belongs to the thioesterase PaaI family.

The polypeptide is Putative esterase DR_2321 (Deinococcus radiodurans (strain ATCC 13939 / DSM 20539 / JCM 16871 / CCUG 27074 / LMG 4051 / NBRC 15346 / NCIMB 9279 / VKM B-1422 / R1)).